Here is a 321-residue protein sequence, read N- to C-terminus: Cytochrome c biogenesis protein CcsA (321 aa).

The next 8 membrane-spanning stretches (helical) occupy residues 9 to 29 (ILTH…LMNL), 44 to 64 (GMIA…IYSG), 71 to 91 (LYES…VPYF), 98 to 118 (FSAI…SGLL), 143 to 163 (MLLS…LLVI), 225 to 245 (VISL…VWAN), 252 to 272 (WNWD…AIYL), and 286 to 306 (AIVA…VNLL).

The protein belongs to the CcmF/CycK/Ccl1/NrfE/CcsA family. In terms of assembly, may interact with Ccs1.

It localises to the plastid. The protein resides in the chloroplast thylakoid membrane. Required during biogenesis of c-type cytochromes (cytochrome c6 and cytochrome f) at the step of heme attachment. This chain is Cytochrome c biogenesis protein CcsA, found in Acorus calamus var. americanus (American sweet flag).